The primary structure comprises 431 residues: Adenylosuccinate synthetase (431 aa).

Residues 13–19 and 41–43 each bind GTP; these read GDEGKGK and GHT. Residue D14 is the Proton acceptor of the active site. Positions 14 and 41 each coordinate Mg(2+). Residues 14–17, 39–42, T130, R144, Q225, T240, and R304 each bind IMP; these read DEGK and NAGH. Residue H42 is the Proton donor of the active site. A substrate-binding site is contributed by 300-306; it reads ATTGRAR. GTP-binding positions include R306, 332-334, and 415-417; these read KLD and STG.

Belongs to the adenylosuccinate synthetase family. In terms of assembly, homodimer. Mg(2+) serves as cofactor.

It is found in the cytoplasm. It catalyses the reaction IMP + L-aspartate + GTP = N(6)-(1,2-dicarboxyethyl)-AMP + GDP + phosphate + 2 H(+). The protein operates within purine metabolism; AMP biosynthesis via de novo pathway; AMP from IMP: step 1/2. Functionally, plays an important role in the de novo pathway of purine nucleotide biosynthesis. Catalyzes the first committed step in the biosynthesis of AMP from IMP. The sequence is that of Adenylosuccinate synthetase from Ectopseudomonas mendocina (strain ymp) (Pseudomonas mendocina).